A 99-amino-acid polypeptide reads, in one-letter code: A-type ATP synthase subunit F (99 aa).

It belongs to the V-ATPase F subunit family. As to quaternary structure, has multiple subunits with at least A(3), B(3), C, D, E, F, H, I and proteolipid K(x).

It is found in the cell membrane. Component of the A-type ATP synthase that produces ATP from ADP in the presence of a proton gradient across the membrane. This Methanocella arvoryzae (strain DSM 22066 / NBRC 105507 / MRE50) protein is A-type ATP synthase subunit F.